A 51-amino-acid chain; its full sequence is Lantibiotic streptococcin A-FF22 (51 aa).

A propeptide spanning residues 1-25 is cleaved from the precursor; sequence MEKNNEVINSIQEVSLEELDQIIGA. 2 cross-links (beta-methyllanthionine (Thr-Cys)) span residues 33–38 and 42–50; these read TISHEC and TWAFLATCC. Positions 35–49 form a cross-link, lanthionine (Ser-Cys); it reads SHECHLNTWAFLATC. 2,3-didehydrobutyrine is present on T48.

The protein belongs to the type A lantibiotic family. In terms of processing, maturation of lantibiotics involves the enzymatic conversion of Thr, and Ser into dehydrated AA and the formation of thioether bonds with cysteine. This is followed by membrane translocation and cleavage of the modified precursor.

The protein localises to the secreted. The protein resides in the cell surface. Its function is as follows. Lanthionine-containing peptide antibiotic (lantibiotic) active on certain Gram-positive bacteria. The bactericidal activity of lantibiotics is based on depolarization of energized bacterial cytoplasmic membranes, initiated by the formation of aqueous transmembrane pores. The sequence is that of Lantibiotic streptococcin A-FF22 (scnA) from Streptococcus pyogenes.